A 491-amino-acid polypeptide reads, in one-letter code: Glucose-6-phosphate 1-dehydrogenase (491 aa).

NADP(+)-binding positions include Arg-50, Asp-92–Val-93, and Lys-147. Substrate-binding residues include His-177, Lys-181, Glu-215, and Asp-234. His-239 (proton acceptor) is an active-site residue. Residues Lys-339 and Lys-344 each contribute to the substrate site.

The protein belongs to the glucose-6-phosphate dehydrogenase family.

It catalyses the reaction D-glucose 6-phosphate + NADP(+) = 6-phospho-D-glucono-1,5-lactone + NADPH + H(+). It functions in the pathway carbohydrate degradation; pentose phosphate pathway; D-ribulose 5-phosphate from D-glucose 6-phosphate (oxidative stage): step 1/3. Its function is as follows. Catalyzes the oxidation of glucose 6-phosphate to 6-phosphogluconolactone. The polypeptide is Glucose-6-phosphate 1-dehydrogenase (Dickeya dadantii (strain 3937) (Erwinia chrysanthemi (strain 3937))).